A 103-amino-acid polypeptide reads, in one-letter code: Small ribosomal subunit protein uS10 (103 aa).

Belongs to the universal ribosomal protein uS10 family. In terms of assembly, part of the 30S ribosomal subunit.

Functionally, involved in the binding of tRNA to the ribosomes. This is Small ribosomal subunit protein uS10 from Colwellia psychrerythraea (strain 34H / ATCC BAA-681) (Vibrio psychroerythus).